A 245-amino-acid polypeptide reads, in one-letter code: UPF0246 protein cgR_1824 (245 aa).

It belongs to the UPF0246 family.

The chain is UPF0246 protein cgR_1824 from Corynebacterium glutamicum (strain R).